The primary structure comprises 231 residues: Ribonuclease 3 (231 aa).

An RNase III domain is found at 5–134 (QKKLKNDYGL…FLGALFIDQG (130 aa)). Mg(2+) is bound at residue Glu-47. Asp-51 is an active-site residue. 2 residues coordinate Mg(2+): Asn-120 and Glu-123. Glu-123 is an active-site residue. The region spanning 160–229 (DYKTELQEVL…AENAIKGQNH (70 aa)) is the DRBM domain.

Belongs to the ribonuclease III family. Homodimer. Mg(2+) serves as cofactor.

The protein localises to the cytoplasm. It carries out the reaction Endonucleolytic cleavage to 5'-phosphomonoester.. Digests double-stranded RNA. Involved in the processing of primary rRNA transcript to yield the immediate precursors to the large and small rRNAs (23S and 16S). Processes some mRNAs, and tRNAs when they are encoded in the rRNA operon. Processes pre-crRNA and tracrRNA of type II CRISPR loci if present in the organism. The chain is Ribonuclease 3 from Lactococcus lactis subsp. lactis (strain IL1403) (Streptococcus lactis).